We begin with the raw amino-acid sequence, 107 residues long: Putative double-stranded DNA mimic protein HI_1450 (107 aa).

The protein belongs to the putative dsDNA mimic protein family. As to quaternary structure, monomer in solution. Interacts with the DNA-binding protein HU.

May act as a double-stranded DNA (dsDNA) mimic. Probably regulates the activity of the DNA-binding protein HU. The chain is Putative double-stranded DNA mimic protein HI_1450 from Haemophilus influenzae (strain ATCC 51907 / DSM 11121 / KW20 / Rd).